The primary structure comprises 388 residues: Na(+)/H(+) antiporter NhaA (388 aa).

Topologically, residues 1–11 (MKHLHRFFSSD) are cytoplasmic. The helical transmembrane segment at 12–31 (ASGGIILIIAAILAMIMANS) threads the bilayer. Topologically, residues 32 to 58 (GATSGWYHDFLETPVQLRVGSLEINKN) are periplasmic. A helical transmembrane segment spans residues 59-80 (MLLWINDALMAVFFLLVGLEVK). Over 81 to 96 (RELMQGSLASLRQAAF) the chain is Cytoplasmic. Residues 97-116 (PVIAAIGGMIVPALLYLAFN) traverse the membrane as a helical segment. Over 117-122 (YADPIT) the chain is Periplasmic. A helical transmembrane segment spans residues 123 to 130 (REGWAIPA). Over 131 to 154 (ATDIAFALGVLALLGSRVPLALKI) the chain is Cytoplasmic. Residues 155 to 176 (FLMALAIIDDLGAIIIIALFYT) traverse the membrane as a helical segment. Over 177–180 (NDLS) the chain is Periplasmic. A helical membrane pass occupies residues 181 to 200 (MASLGVAAVAIAVLAVLNLC). Over 201–204 (GVRR) the chain is Cytoplasmic. The helical transmembrane segment at 205–222 (TGVYILVGVVLWTAVLKS) threads the bilayer. Residue Gly223 is a topological domain, periplasmic. A helical membrane pass occupies residues 224 to 236 (VHATLAGVIVGFF). The Cytoplasmic segment spans residues 237 to 253 (IPLKEKHGRSPAKRLEH). Residues 254–272 (VLHPWVAYLILPLFAFANA) traverse the membrane as a helical segment. The Periplasmic segment spans residues 273–286 (GVSLQGVTLDGLTS). A helical membrane pass occupies residues 287 to 310 (ILPLGIIAGLLIGKPLGISLFCWL). Over 311-339 (ALRLKLAHLPEGTTYQQIMAVGILCGIGF) the chain is Cytoplasmic. Residues 340 to 350 (TMSIFIASLAF) form a helical membrane-spanning segment. Residues 351–357 (GSVDPEL) lie on the Periplasmic side of the membrane. Residues 358-380 (INWAKLGILVGSISSAVIGYSWL) traverse the membrane as a helical segment. Residues 381 to 388 (RVRLRPSV) are Cytoplasmic-facing.

It belongs to the NhaA Na(+)/H(+) (TC 2.A.33) antiporter family.

Its subcellular location is the cell inner membrane. It catalyses the reaction Na(+)(in) + 2 H(+)(out) = Na(+)(out) + 2 H(+)(in). Na(+)/H(+) antiporter that extrudes sodium in exchange for external protons. This is Na(+)/H(+) antiporter NhaA from Escherichia coli O9:H4 (strain HS).